Consider the following 463-residue polypeptide: Glycine--tRNA ligase (463 aa).

The substrate site is built by R98 and E174. ATP is bound by residues 206-208, 216-221, 290-291, and 334-337; these read RNE, FRTREF, EL, and GADR. Residue 221–225 coordinates substrate; it reads FEQME. Position 330 to 334 (330 to 334) interacts with substrate; it reads EPSLG.

It belongs to the class-II aminoacyl-tRNA synthetase family. Homodimer.

The protein resides in the cytoplasm. It carries out the reaction tRNA(Gly) + glycine + ATP = glycyl-tRNA(Gly) + AMP + diphosphate. In terms of biological role, catalyzes the attachment of glycine to tRNA(Gly). In Staphylococcus haemolyticus (strain JCSC1435), this protein is Glycine--tRNA ligase.